Consider the following 66-residue polypeptide: DNA gyrase inhibitor YacG (66 aa).

Residues C9, C12, C28, and C32 each coordinate Zn(2+).

Belongs to the DNA gyrase inhibitor YacG family. As to quaternary structure, interacts with GyrB. Zn(2+) serves as cofactor.

Functionally, inhibits all the catalytic activities of DNA gyrase by preventing its interaction with DNA. Acts by binding directly to the C-terminal domain of GyrB, which probably disrupts DNA binding by the gyrase. The chain is DNA gyrase inhibitor YacG from Pseudomonas fluorescens (strain SBW25).